The following is a 379-amino-acid chain: Glucose-1-phosphate adenylyltransferase (379 aa).

Residues glycine 164, 179 to 180, and serine 190 each bind alpha-D-glucose 1-phosphate; that span reads EK.

Belongs to the bacterial/plant glucose-1-phosphate adenylyltransferase family. In terms of assembly, homotetramer.

It carries out the reaction alpha-D-glucose 1-phosphate + ATP + H(+) = ADP-alpha-D-glucose + diphosphate. It participates in glycan biosynthesis; glycogen biosynthesis. Its function is as follows. Involved in the biosynthesis of ADP-glucose, a building block required for the elongation reactions to produce glycogen. Catalyzes the reaction between ATP and alpha-D-glucose 1-phosphate (G1P) to produce pyrophosphate and ADP-Glc. The protein is Glucose-1-phosphate adenylyltransferase of Streptococcus agalactiae serotype III (strain NEM316).